A 136-amino-acid chain; its full sequence is Large ribosomal subunit protein uL16 (136 aa).

Belongs to the universal ribosomal protein uL16 family. As to quaternary structure, part of the 50S ribosomal subunit.

Functionally, binds 23S rRNA and is also seen to make contacts with the A and possibly P site tRNAs. This chain is Large ribosomal subunit protein uL16, found in Glaesserella parasuis serovar 5 (strain SH0165) (Haemophilus parasuis).